Here is a 201-residue protein sequence, read N- to C-terminus: Protein GrpE (201 aa).

It belongs to the GrpE family. In terms of assembly, homodimer.

It is found in the cytoplasm. Its function is as follows. Participates actively in the response to hyperosmotic and heat shock by preventing the aggregation of stress-denatured proteins, in association with DnaK and GrpE. It is the nucleotide exchange factor for DnaK and may function as a thermosensor. Unfolded proteins bind initially to DnaJ; upon interaction with the DnaJ-bound protein, DnaK hydrolyzes its bound ATP, resulting in the formation of a stable complex. GrpE releases ADP from DnaK; ATP binding to DnaK triggers the release of the substrate protein, thus completing the reaction cycle. Several rounds of ATP-dependent interactions between DnaJ, DnaK and GrpE are required for fully efficient folding. This is Protein GrpE from Shewanella frigidimarina (strain NCIMB 400).